The chain runs to 74 residues: Cytochrome c oxidase assembly factor 5 (74 aa).

The CHCH domain maps to 27–65; the sequence is QSACVLQEGKSPRQCLKEGNCRALQYSFFECKRSMLDAR. The Cx10C motif motif lies at 30 to 41; sequence CVLQEGKSPRQC. Disulfide bonds link C30–C57 and C41–C47. The residue at position 37 (S37) is a Phosphoserine. The Cx9C motif signature appears at 47–57; sequence CRALQYSFFEC.

This sequence belongs to the PET191 family.

Its function is as follows. Involved in an early step of the mitochondrial complex IV assembly process. The polypeptide is Cytochrome c oxidase assembly factor 5 (Coa5) (Mus musculus (Mouse)).